The primary structure comprises 1231 residues: Alpha-protein kinase 1 (1231 aa).

Residues phenylalanine 61, glutamine 67, arginine 116, arginine 150 to arginine 153, aspartate 231, lysine 233, serine 236 to threonine 237, and phenylalanine 295 each bind ADP-D-glycero-beta-D-manno-heptose. Disordered stretches follow at residues glutamate 508–threonine 540, glycine 609–alanine 637, glycine 692–proline 739, threonine 767–glutamine 791, proline 811–glycine 843, and alanine 859–aspartate 888. Positions arginine 509–lysine 522 are enriched in polar residues. The segment covering serine 524–arginine 537 has biased composition (basic and acidic residues). The segment covering serine 700–serine 714 has biased composition (low complexity). The segment covering proline 775–aspartate 784 has biased composition (acidic residues). Residues lysine 1003–proline 1223 enclose the Alpha-type protein kinase domain.

This sequence belongs to the protein kinase superfamily. Alpha-type protein kinase family. ALPK subfamily. In terms of tissue distribution, widely expressed. Expressed in the retina and in sweat glands, especially in the myoepithelial cells.

It is found in the cytoplasm. The protein localises to the cytosol. It localises to the cytoskeleton. The protein resides in the spindle pole. Its subcellular location is the microtubule organizing center. It is found in the centrosome. The protein localises to the cell projection. It localises to the cilium. The enzyme catalyses L-seryl-[protein] + ATP = O-phospho-L-seryl-[protein] + ADP + H(+). It catalyses the reaction L-threonyl-[protein] + ATP = O-phospho-L-threonyl-[protein] + ADP + H(+). Its activity is regulated as follows. Serine/threonine-protein kinase activity is stimulated upon ADP-D-glycero-beta-D-manno-heptose (ADP-Heptose)-binding. Functionally, serine/threonine-protein kinase that detects bacterial pathogen-associated molecular pattern metabolites (PAMPs) and initiates an innate immune response, a critical step for pathogen elimination and engagement of adaptive immunity. Specifically recognizes and binds ADP-D-glycero-beta-D-manno-heptose (ADP-Heptose), a potent PAMP present in all Gram-negative and some Gram-positive bacteria. ADP-Heptose-binding stimulates its kinase activity to phosphorylate and activate TIFA, triggering pro-inflammatory NF-kappa-B signaling. May be involved in monosodium urate monohydrate (MSU)-induced inflammation by mediating phosphorylation of unconventional myosin MYO9A. May also play a role in apical protein transport by mediating phosphorylation of unconventional myosin MYO1A. May play a role in ciliogenesis. The protein is Alpha-protein kinase 1 of Mus musculus (Mouse).